Reading from the N-terminus, the 1041-residue chain is Histone deacetylase complex subunit SAP130-B (1041 aa).

5 disordered regions span residues 1–62, 111–131, 572–592, 614–769, and 806–852; these read MSSQ…QEPV, KSTM…SAVP, TNQG…EPKS, TPAG…PSGA, and VLAN…DEER. Residues 18-30 show a composition bias toward polar residues; it reads VSNSGASVGQNVQ. Basic and acidic residues predominate over residues 33–42; the sequence is EVAREIDVQS. A compositionally biased stretch (low complexity) spans 576–592; it reads VQTSSVSSQQASSEPKS. The segment covering 614–641 has biased composition (polar residues); the sequence is TPAGTTVMQSHSQSPGIGSSPAQGSSPR. The span at 707–728 shows a compositional bias: low complexity; sequence PGAADQPSAAASLPSSHHPTAA.

It belongs to the SAP130 family.

It localises to the nucleus. Acts as a transcriptional repressor. In Xenopus laevis (African clawed frog), this protein is Histone deacetylase complex subunit SAP130-B (sap130-b).